The chain runs to 218 residues: Pyridoxine/pyridoxamine 5'-phosphate oxidase (218 aa).

Substrate contacts are provided by residues Arg14 to Tyr17 and Lys72. Residues Arg67–Lys72, Tyr82–Thr83, Arg88, Lys89, and Gln111 each bind FMN. Substrate contacts are provided by Tyr129, Arg133, and Ser137. Residues Gln146–Ser147 and Trp191 each bind FMN. Arg197–His199 contributes to the substrate binding site. Residue Arg201 coordinates FMN.

The protein belongs to the pyridoxamine 5'-phosphate oxidase family. Homodimer. FMN serves as cofactor.

The catalysed reaction is pyridoxamine 5'-phosphate + O2 + H2O = pyridoxal 5'-phosphate + H2O2 + NH4(+). It carries out the reaction pyridoxine 5'-phosphate + O2 = pyridoxal 5'-phosphate + H2O2. The protein operates within cofactor metabolism; pyridoxal 5'-phosphate salvage; pyridoxal 5'-phosphate from pyridoxamine 5'-phosphate: step 1/1. Its pathway is cofactor metabolism; pyridoxal 5'-phosphate salvage; pyridoxal 5'-phosphate from pyridoxine 5'-phosphate: step 1/1. Functionally, catalyzes the oxidation of either pyridoxine 5'-phosphate (PNP) or pyridoxamine 5'-phosphate (PMP) into pyridoxal 5'-phosphate (PLP). The sequence is that of Pyridoxine/pyridoxamine 5'-phosphate oxidase from Citrobacter koseri (strain ATCC BAA-895 / CDC 4225-83 / SGSC4696).